Here is a 1170-residue protein sequence, read N- to C-terminus: DNA-directed RNA polymerase subunit beta (1170 aa).

It belongs to the RNA polymerase beta chain family. The RNAP catalytic core consists of 2 alpha, 1 beta, 1 beta' and 1 omega subunit. When a sigma factor is associated with the core the holoenzyme is formed, which can initiate transcription.

It carries out the reaction RNA(n) + a ribonucleoside 5'-triphosphate = RNA(n+1) + diphosphate. In terms of biological role, DNA-dependent RNA polymerase catalyzes the transcription of DNA into RNA using the four ribonucleoside triphosphates as substrates. The chain is DNA-directed RNA polymerase subunit beta from Corynebacterium urealyticum (strain ATCC 43042 / DSM 7109).